Here is a 197-residue protein sequence, read N- to C-terminus: Recombination protein RecR (197 aa).

The C4-type zinc-finger motif lies at 56–71 (CNVCFHFSADPICEIC). The region spanning 79–173 (QTICVVADSR…KVTRIAFGLP (95 aa)) is the Toprim domain.

It belongs to the RecR family.

May play a role in DNA repair. It seems to be involved in an RecBC-independent recombinational process of DNA repair. It may act with RecF and RecO. This is Recombination protein RecR from Rippkaea orientalis (strain PCC 8801 / RF-1) (Cyanothece sp. (strain PCC 8801)).